The primary structure comprises 496 residues: Genome polyprotein (496 aa).

Topologically, residues 1-447 (SRCTHLENRD…HTVLGGAFNS (447 aa)) are extracellular. Disulfide bonds link C3–C30, C60–C116, C60–C121, C74–C105, C92–C116, and C92–C121. The segment at 98–111 (DRGWGNHCGLFGKG) is fusion peptide. N-linked (GlcNAc...) asparagine; by host glycosylation is present at N154. 2 disulfide bridges follow: C186–C290 and C307–C338. Residues 448–468 (IFGGVGFLPKLLMGVALAWLG) traverse the membrane as a helical segment. Topologically, residues 469-479 (LNTRNPTMSMS) are cytoplasmic. Residues 480–496 (FLLAGGLVLAMTLGVGA) traverse the membrane as a helical segment.

In terms of assembly, homodimer; in the endoplasmic reticulum and Golgi. In terms of processing, N-glycosylated.

It localises to the virion membrane. The protein resides in the host endoplasmic reticulum membrane. Functionally, binds to host cell surface receptor and mediates fusion between viral and cellular membranes. Envelope protein is synthesized in the endoplasmic reticulum in the form of heterodimer with protein prM. They play a role in virion budding in the ER, and the newly formed immature particle is covered with 60 spikes composed of heterodimer between precursor prM and envelope protein E. The virion is transported to the Golgi apparatus where the low pH causes dissociation of PrM-E heterodimers and formation of E homodimers. prM-E cleavage is ineficient, and many virions are only partially matured. These uncleaved prM would play a role in immune evasion. The chain is Genome polyprotein from Bos taurus (Bovine).